We begin with the raw amino-acid sequence, 478 residues long: Probable cyclin-dependent kinase 9 (478 aa).

Positions 1–17 (MSAQNYHAGLHQSSTQR) are enriched in polar residues. Residues 1-55 (MSAQNYHAGLHQSSTQRPPKRPNTEHAQEPPKRALIGGQTTPSSSGGGQTPNGTN) form a disordered region. The span at 22–32 (PNTEHAQEPPK) shows a compositional bias: basic and acidic residues. Residues 85–413 (YEKLNKIGQG…SDEAEDDIWF (329 aa)) enclose the Protein kinase domain. ATP contacts are provided by residues 91–99 (IGQGTFGEV) and Lys-114. Asp-217 acts as the Proton acceptor in catalysis. The tract at residues 444 to 478 (HANRGRHQNAQQRPNQQQARPSNAIPAGQYRDTIF) is disordered. Low complexity predominate over residues 451 to 464 (QNAQQRPNQQQARP).

This sequence belongs to the protein kinase superfamily. CMGC Ser/Thr protein kinase family. CDC2/CDKX subfamily. As to quaternary structure, associates with cyclin-T (cit-1.1 or cit-1.2) to form P-TEFb.

It localises to the nucleus. The enzyme catalyses L-seryl-[protein] + ATP = O-phospho-L-seryl-[protein] + ADP + H(+). The catalysed reaction is L-threonyl-[protein] + ATP = O-phospho-L-threonyl-[protein] + ADP + H(+). It catalyses the reaction [DNA-directed RNA polymerase] + ATP = phospho-[DNA-directed RNA polymerase] + ADP + H(+). In terms of biological role, essential member of the cyclin-dependent kinase pair (CDK9/cyclin-T) complex, also called positive transcription elongation factor B (P-TEFb), which is proposed to facilitate the transition from abortive to production elongation by phosphorylating the CTD (C-terminal domain) of the large subunit of RNA polymerase II (RNAP II) and spt-5. The polypeptide is Probable cyclin-dependent kinase 9 (cdk-9) (Caenorhabditis elegans).